The sequence spans 152 residues: Transcription elongation factor Spt5 (152 aa).

Positions 94-124 (PGDLVEVIAGPFKGQKAKVVKIDESKDEVVV) constitute a KOW domain.

The protein belongs to the archaeal Spt5 family. Heterodimer composed of Spt4 and Spt5. Interacts with RNA polymerase (RNAP) independently of nucleic acids. Forms a homodimer in solution.

Its function is as follows. Stimulates transcription elongation. This is Transcription elongation factor Spt5 from Pyrococcus furiosus (strain ATCC 43587 / DSM 3638 / JCM 8422 / Vc1).